We begin with the raw amino-acid sequence, 266 residues long: L-cystine-binding protein TcyJ (266 aa).

A signal peptide spans 1–29; the sequence is MKLAHLGRQALMGVMAVALVAGMSVKSFA.

This sequence belongs to the bacterial solute-binding protein 3 family. The complex is composed of two ATP-binding proteins (TcyN), two transmembrane proteins (TcyL) and a solute-binding protein (TcyJ).

It localises to the periplasm. Part of the ABC transporter complex TcyJLN involved in L-cystine import. Binds cystine. The sequence is that of L-cystine-binding protein TcyJ from Escherichia coli O6:H1 (strain CFT073 / ATCC 700928 / UPEC).